Here is a 214-residue protein sequence, read N- to C-terminus: Adenylate kinase (214 aa).

Residue G10–T15 coordinates ATP. The tract at residues S30 to V59 is NMP. Residues T31, R36, E57–V59, G85–R88, and Q92 contribute to the AMP site. The interval G126–D163 is LID. An ATP-binding site is contributed by R127. Residues C130 and C133 each contribute to the Zn(2+) site. ATP is bound at residue T136 to Y137. C150 and C153 together coordinate Zn(2+). The AMP site is built by R160 and R171. Position 199 (G199) interacts with ATP.

Belongs to the adenylate kinase family. Monomer.

The protein localises to the cytoplasm. The enzyme catalyses AMP + ATP = 2 ADP. It functions in the pathway purine metabolism; AMP biosynthesis via salvage pathway; AMP from ADP: step 1/1. Functionally, catalyzes the reversible transfer of the terminal phosphate group between ATP and AMP. Plays an important role in cellular energy homeostasis and in adenine nucleotide metabolism. The protein is Adenylate kinase of Ruminiclostridium cellulolyticum (strain ATCC 35319 / DSM 5812 / JCM 6584 / H10) (Clostridium cellulolyticum).